Reading from the N-terminus, the 525-residue chain is Tubulin-specific chaperone E (525 aa).

One can recognise a CAP-Gly domain in the interval 33 to 77; sequence GKVDGFEGNWYGIEWDDPKRGKHQGTVKGKQYFKCINKGSGSFMK. LRR repeat units lie at residues 300-321, 326-347, and 362-383; these read TLKS…LSSL, QLTE…GDVD, and NLKR…DKLD. Residues 414-444 form a disordered region; it reads ENEIENDIENNNNNIKKDNNNNNKNNKNNKN. Low complexity predominate over residues 422 to 444; that stretch reads ENNNNNIKKDNNNNNKNNKNNKN. The LRRCT domain occupies 441 to 481; the sequence is NNKNNKTIFLNRLNIIPRLSNLKKLNLSDITLLERKDAELY.

Belongs to the TBCE family. In terms of assembly, supercomplex made of cofactors A to E. Cofactors A and D function by capturing and stabilizing tubulin in a quasi-native conformation. Cofactor E binds to the cofactor D-tubulin complex; interaction with cofactor C then causes the release of tubulin polypeptides that are committed to the native state.

It is found in the cytoplasm. Its subcellular location is the cytoskeleton. Its function is as follows. Tubulin-folding protein; involved in the second step of the tubulin folding pathway. This chain is Tubulin-specific chaperone E (tbce), found in Dictyostelium discoideum (Social amoeba).